Reading from the N-terminus, the 444-residue chain is UDP-N-acetylglucosamine 1-carboxyvinyltransferase (444 aa).

22 to 23 (KN) contacts phosphoenolpyruvate. Residue Arg94 participates in UDP-N-acetyl-alpha-D-glucosamine binding. Catalysis depends on Asp119, which acts as the Proton donor. 2 residues coordinate UDP-N-acetyl-alpha-D-glucosamine: Asp309 and Val331.

This sequence belongs to the EPSP synthase family. MurA subfamily.

Its subcellular location is the cytoplasm. The catalysed reaction is phosphoenolpyruvate + UDP-N-acetyl-alpha-D-glucosamine = UDP-N-acetyl-3-O-(1-carboxyvinyl)-alpha-D-glucosamine + phosphate. It participates in cell wall biogenesis; peptidoglycan biosynthesis. Its function is as follows. Cell wall formation. Adds enolpyruvyl to UDP-N-acetylglucosamine. The chain is UDP-N-acetylglucosamine 1-carboxyvinyltransferase from Chlamydia trachomatis serovar A (strain ATCC VR-571B / DSM 19440 / HAR-13).